We begin with the raw amino-acid sequence, 263 residues long: Type-2Ba cytolytic delta-endotoxin (263 aa).

The protein belongs to the cyt1/cyt2 endotoxin family. Active after proteolytic processing.

In terms of biological role, kills the larvae of dipteran insects by making pores in the epithelial cell membrane of the insect midgut. The sequence is that of Type-2Ba cytolytic delta-endotoxin (cyt2Ba1) from Bacillus thuringiensis subsp. israelensis.